The primary structure comprises 174 residues: 3-hydroxydecanoyl-[acyl-carrier-protein] dehydratase (174 aa).

H73 is a catalytic residue.

Belongs to the thioester dehydratase family. FabA subfamily. Homodimer.

The protein localises to the cytoplasm. The enzyme catalyses a (3R)-hydroxyacyl-[ACP] = a (2E)-enoyl-[ACP] + H2O. The catalysed reaction is (3R)-hydroxydecanoyl-[ACP] = (2E)-decenoyl-[ACP] + H2O. It catalyses the reaction (2E)-decenoyl-[ACP] = (3Z)-decenoyl-[ACP]. It functions in the pathway lipid metabolism; fatty acid biosynthesis. Necessary for the introduction of cis unsaturation into fatty acids. Catalyzes the dehydration of (3R)-3-hydroxydecanoyl-ACP to E-(2)-decenoyl-ACP and then its isomerization to Z-(3)-decenoyl-ACP. Can catalyze the dehydratase reaction for beta-hydroxyacyl-ACPs with saturated chain lengths up to 16:0, being most active on intermediate chain length. The sequence is that of 3-hydroxydecanoyl-[acyl-carrier-protein] dehydratase from Cellvibrio japonicus (strain Ueda107) (Pseudomonas fluorescens subsp. cellulosa).